Here is a 194-residue protein sequence, read N- to C-terminus: Crossover junction endodeoxyribonuclease RuvC (194 aa).

Residues D8, E72, and D144 contribute to the active site. Mg(2+)-binding residues include D8, E72, and D144.

Belongs to the RuvC family. In terms of assembly, homodimer which binds Holliday junction (HJ) DNA. The HJ becomes 2-fold symmetrical on binding to RuvC with unstacked arms; it has a different conformation from HJ DNA in complex with RuvA. In the full resolvosome a probable DNA-RuvA(4)-RuvB(12)-RuvC(2) complex forms which resolves the HJ. Requires Mg(2+) as cofactor.

It localises to the cytoplasm. The enzyme catalyses Endonucleolytic cleavage at a junction such as a reciprocal single-stranded crossover between two homologous DNA duplexes (Holliday junction).. Its function is as follows. The RuvA-RuvB-RuvC complex processes Holliday junction (HJ) DNA during genetic recombination and DNA repair. Endonuclease that resolves HJ intermediates. Cleaves cruciform DNA by making single-stranded nicks across the HJ at symmetrical positions within the homologous arms, yielding a 5'-phosphate and a 3'-hydroxyl group; requires a central core of homology in the junction. The consensus cleavage sequence is 5'-(A/T)TT(C/G)-3'. Cleavage occurs on the 3'-side of the TT dinucleotide at the point of strand exchange. HJ branch migration catalyzed by RuvA-RuvB allows RuvC to scan DNA until it finds its consensus sequence, where it cleaves and resolves the cruciform DNA. In Psychrobacter sp. (strain PRwf-1), this protein is Crossover junction endodeoxyribonuclease RuvC.